The sequence spans 774 residues: Mastermind-like domain-containing protein 1 (774 aa).

Disordered regions lie at residues Ser-257–Ala-279, Leu-310–Leu-365, Ala-386–Phe-421, His-442–Phe-473, Gly-525–His-609, Pro-656–Ser-678, and Leu-755–Pro-774. A compositionally biased stretch (pro residues) spans Leu-331–Ser-361. Positions Ala-386–Ala-397 are enriched in polar residues. Residues Gln-574–His-609 are compositionally biased toward low complexity. A compositionally biased stretch (polar residues) spans Pro-656–Asp-669. Ser-676 is subject to Phosphoserine.

It belongs to the mastermind family. In terms of tissue distribution, expressed in fetal brain, fetal ovary and fetal testis. Expressed in adult brain, ovary, skin, testis, uterus. Highly expressed in skeletal muscle.

The protein resides in the nucleus. In terms of biological role, transactivates the HES3 promoter independently of NOTCH proteins. HES3 is a non-canonical NOTCH target gene which lacks binding sites for RBPJ. In Homo sapiens (Human), this protein is Mastermind-like domain-containing protein 1 (MAMLD1).